The following is a 224-amino-acid chain: ATP synthase subunit a (224 aa).

6 helical membrane-spanning segments follow: residues 17–37, 72–92, 99–119, 125–145, 166–186, and 187–207; these read FSLN…IYWL, IFIS…FPYI, LTLT…YGWI, MFAH…MVCI, IAGH…SYIL, and VTFL…VAMI.

This sequence belongs to the ATPase A chain family. F-type ATPases have 2 components, CF(1) - the catalytic core - and CF(0) - the membrane proton channel. CF(1) has five subunits: alpha(3), beta(3), gamma(1), delta(1), epsilon(1). CF(0) has three main subunits: a, b and c.

It localises to the mitochondrion inner membrane. Mitochondrial membrane ATP synthase (F(1)F(0) ATP synthase or Complex V) produces ATP from ADP in the presence of a proton gradient across the membrane which is generated by electron transport complexes of the respiratory chain. F-type ATPases consist of two structural domains, F(1) - containing the extramembraneous catalytic core and F(0) - containing the membrane proton channel, linked together by a central stalk and a peripheral stalk. During catalysis, ATP synthesis in the catalytic domain of F(1) is coupled via a rotary mechanism of the central stalk subunits to proton translocation. Key component of the proton channel; it may play a direct role in the translocation of protons across the membrane. This Drosophila melanogaster (Fruit fly) protein is ATP synthase subunit a (mt:ATPase6).